Here is a 448-residue protein sequence, read N- to C-terminus: Multiple inositol polyphosphate phosphatase 1 (448 aa).

The first 19 residues, Met1–Ala19, serve as a signal peptide directing secretion. Residue His69 is part of the active site. N-linked (GlcNAc...) asparagine glycosylation is found at Asn203, Asn257, Asn409, and Asn441. The Prevents secretion from ER signature appears at Ala445–Leu448.

The protein belongs to the histidine acid phosphatase family. MINPP1 subfamily. Post-translationally, N-glycosylated. Present in growth plate chondrocytes but not detectable in articular chondrocytes (at protein level). Spatially restricted to chondrocytes in the lower portion of the proliferative zone and the upper portion of the hypertrophic zone in the growth plate of long bones (at protein level). Weakly expressed in kidney, liver, lung, skin and spleen, and not detected in brain, heart and muscle.

The protein resides in the endoplasmic reticulum lumen. It is found in the secreted. The protein localises to the cell membrane. It carries out the reaction 1D-myo-inositol hexakisphosphate + H2O = 1D-myo-inositol 1,2,4,5,6-pentakisphosphate + phosphate. The enzyme catalyses 1D-myo-inositol 1,2,4,5,6-pentakisphosphate + H2O = 1D-myo-inositol 1,2,5,6-tetrakisphosphate + phosphate. It catalyses the reaction 1D-myo-inositol 1,2,5,6-tetrakisphosphate + H2O = 1D-myo-inositol 1,2,6-trisphosphate + phosphate. The catalysed reaction is 1D-myo-inositol 1,2,6-trisphosphate + H2O = 1D-myo-inositol 1,2-bisphosphate + phosphate. It carries out the reaction 1D-myo-inositol 1,2-bisphosphate + H2O = 1D-myo-inositol 2-phosphate + phosphate. The enzyme catalyses 1D-myo-inositol hexakisphosphate + H2O = 1D-myo-inositol 1,2,3,5,6-pentakisphosphate + phosphate. It catalyses the reaction 1D-myo-inositol 1,2,3,5,6-pentakisphosphate + H2O = 1D-myo-inositol 1,2,3,6-tetrakisphosphate + phosphate. The catalysed reaction is 1D-myo-inositol 1,2,3,6-tetrakisphosphate + H2O = 1D-myo-inositol 1,2,3-trisphosphate + phosphate. It carries out the reaction 1D-myo-inositol 1,2,3-trisphosphate + H2O = 1D-myo-inositol 2,3-bisphosphate + phosphate. The enzyme catalyses 1D-myo-inositol 2,3-bisphosphate + H2O = 1D-myo-inositol 2-phosphate + phosphate. It catalyses the reaction 1D-myo-inositol 1,3,4,5,6-pentakisphosphate + H2O = 1D-myo-inositol 1,4,5,6-tetrakisphosphate + phosphate. The catalysed reaction is 1D-myo-inositol 1,4,5,6-tetrakisphosphate + H2O = 1D-myo-inositol 1,4,5-trisphosphate + phosphate. It carries out the reaction (2R)-2,3-bisphosphoglycerate + H2O = (2R)-2-phosphoglycerate + phosphate. Multiple inositol polyphosphate phosphatase that hydrolyzes 1D-myo-inositol 1,3,4,5,6-pentakisphosphate (InsP5[2OH]) and 1D-myo-inositol hexakisphosphate (InsP6) to a range of less phosphorylated inositol phosphates. This regulates the availability of these various small molecule second messengers and metal chelators which control many aspects of cell physiology. Has a weak in vitro activity towards 1D-myo-inositol 1,4,5-trisphosphate which is unlikely to be physiologically relevant. By regulating intracellular inositol polyphosphates pools, which act as metal chelators, it may control the availability of intracellular calcium and iron, which are important for proper neuronal development and homeostasis. May have a dual substrate specificity, and function as a 2,3-bisphosphoglycerate 3-phosphatase hydrolyzing 2,3-bisphosphoglycerate to 2-phosphoglycerate. 2,3-bisphosphoglycerate (BPG) is formed as part of the Rapoport-Luebering glycolytic bypass and is a regulator of systemic oxygen homeostasis as the major allosteric effector of hemoglobin. The protein is Multiple inositol polyphosphate phosphatase 1 (MINPP1) of Gallus gallus (Chicken).